Here is a 148-residue protein sequence, read N- to C-terminus: Glutamyl-tRNA(Gln) amidotransferase subunit C, mitochondrial (148 aa).

The N-terminal 10 residues, 1-10 (MLRLLNKRFY), are a transit peptide targeting the mitochondrion.

It belongs to the GatC family. As to quaternary structure, subunit of the heterotrimeric GatCAB amidotransferase (AdT) complex, composed of A, B and C subunits.

Its subcellular location is the mitochondrion. It carries out the reaction L-glutamyl-tRNA(Gln) + L-glutamine + ATP + H2O = L-glutaminyl-tRNA(Gln) + L-glutamate + ADP + phosphate + H(+). In terms of biological role, allows the formation of correctly charged Gln-tRNA(Gln) through the transamidation of misacylated Glu-tRNA(Gln) in the mitochondria. The reaction takes place in the presence of glutamine and ATP through an activated gamma-phospho-Glu-tRNA(Gln). In Drosophila ananassae (Fruit fly), this protein is Glutamyl-tRNA(Gln) amidotransferase subunit C, mitochondrial.